Consider the following 77-residue polypeptide: MEKLTILLLVAAVLMSTQAMFQGGGEKRPKDKIKFLSKRKTNAESWWEGECLGWSNGCTQPSDCCSNNCKGRNCDIW.

Residues Met1–Ala19 form the signal peptide. The propeptide occupies Met20 to Ser37. 3 disulfide bridges follow: Cys51–Cys65, Cys58–Cys69, and Cys64–Cys74.

It belongs to the conotoxin O2 superfamily. As to expression, expressed by the venom duct.

Its subcellular location is the secreted. Its function is as follows. Inhibits voltage-gated ion channels. This chain is Conotoxin Vc6.14, found in Conus victoriae (Queen Victoria cone).